Reading from the N-terminus, the 335-residue chain is Foldase protein PrsA (335 aa).

A signal peptide spans 1-22 (MRSAKKLLSVLCLGVFILTFTA). Cys23 carries the N-palmitoyl cysteine lipid modification. Cys23 carries the S-diacylglycerol cysteine lipid modification. The PpiC domain maps to 194–285 (PNTMNVSHIL…FGYHIIKINS (92 aa)).

It belongs to the PrsA family.

It localises to the cell membrane. The catalysed reaction is [protein]-peptidylproline (omega=180) = [protein]-peptidylproline (omega=0). Plays a major role in protein secretion by helping the post-translocational extracellular folding of several secreted proteins. The sequence is that of Foldase protein PrsA from Clostridium botulinum (strain Loch Maree / Type A3).